The sequence spans 246 residues: MPVQPPSKDTEEMEAEGDSAAEMNGEEEESEEERSGSQTESEEESSEMDDEDYERRRSECVSEMLDLEKQFSELKEKLFRERLSQLRLRLEEVGAERAPEYTEPLGGLQRSLKIRIQVAGIYKGFCLDVIRNKYECELQGAKQHLESEKLLLYDTLQGELQERIQRLEEDRQSLDLSSEWWDDKLHARGSSRSWDSLPPSKRKKAPLVSGPYIVYMLQEIDILEDWTAIKKARAAVSPQKRKSDGP.

The disordered stretch occupies residues 1–57 (MPVQPPSKDTEEMEAEGDSAAEMNGEEEESEEERSGSQTESEEESSEMDDEDYERRR). 2 stretches are compositionally biased toward acidic residues: residues 11–32 (EEME…ESEE) and 40–52 (ESEE…DDED). Residues 51-98 (EDYERRRSECVSEMLDLEKQFSELKEKLFRERLSQLRLRLEEVGAERA) adopt a coiled-coil conformation. Glycyl lysine isopeptide (Lys-Gly) (interchain with G-Cter in SUMO2) cross-links involve residues Lys-184 and Lys-242.

Belongs to the BRMS1 family. In terms of assembly, homohexamer (Potential). Interacts with SNX6, HDAC1 and RELA. Interacts with ARID4A. Identified in mSin3A corepressor complexes together with SIN3A, SIN3B, RBBP4, RBBP7, SAP30, SUDS3, ARID4A, HDAC1 and HDAC2. Interacts with SPOP; this recruits the protein to a ubiquitin ligase complex containing SPOP and CUL3. Post-translationally, ubiquitinated by a cullin-RING-based BCR (BTB-CUL3-RBX1) E3 ubiquitin-protein ligase complex containing SPOP, leading to proteasomal degradation. As to expression, expression levels are higher in term placentas than in early placentas. Low levels of expression observed in normal pregnancies and in molar pregnancies.

Its subcellular location is the nucleus. The protein localises to the cytoplasm. Transcriptional repressor. Down-regulates transcription activation by NF-kappa-B by promoting the deacetylation of RELA at 'Lys-310'. Promotes HDAC1 binding to promoter regions. Down-regulates expression of anti-apoptotic genes that are controlled by NF-kappa-B. Promotes apoptosis in cells that have inadequate adherence to a substrate, a process called anoikis, and may thereby inhibit metastasis. May be a mediator of metastasis suppression in breast carcinoma. The sequence is that of Breast cancer metastasis-suppressor 1 (BRMS1) from Homo sapiens (Human).